The chain runs to 195 residues: Putative EGF-like and EMI domain-containing protein 1 (195 aa).

The region spanning 86-97 (CTCKSGYQGNRC) is the EGF-like domain.

The chain is Putative EGF-like and EMI domain-containing protein 1 (EGFEM1P) from Homo sapiens (Human).